Here is a 173-residue protein sequence, read N- to C-terminus: HTH-type transcriptional regulator IscR (173 aa).

Residues 2–131 (RLTSKGRYAV…NNITLGELMM (130 aa)) form the HTH rrf2-type domain. Positions 28–51 (LADISERQGISLSYLEQLFSKLRK) form a DNA-binding region, H-T-H motif. 3 residues coordinate [2Fe-2S] cluster: Cys92, Cys98, and Cys104.

Requires [2Fe-2S] cluster as cofactor.

Its function is as follows. Regulates the transcription of several operons and genes involved in the biogenesis of Fe-S clusters and Fe-S-containing proteins. This Vibrio cholerae serotype O1 (strain ATCC 39315 / El Tor Inaba N16961) protein is HTH-type transcriptional regulator IscR.